The chain runs to 292 residues: 4-hydroxy-tetrahydrodipicolinate synthase (292 aa).

Thr45 is a binding site for pyruvate. The active-site Proton donor/acceptor is the Tyr133. Lys161 serves as the catalytic Schiff-base intermediate with substrate. Residue Ile203 coordinates pyruvate.

The protein belongs to the DapA family. As to quaternary structure, homodimer.

It is found in the cytoplasm. The catalysed reaction is L-aspartate 4-semialdehyde + pyruvate = (2S,4S)-4-hydroxy-2,3,4,5-tetrahydrodipicolinate + H2O + H(+). Its pathway is amino-acid biosynthesis; L-lysine biosynthesis via DAP pathway; (S)-tetrahydrodipicolinate from L-aspartate: step 3/4. Catalyzes the condensation of (S)-aspartate-beta-semialdehyde [(S)-ASA] and pyruvate to 4-hydroxy-tetrahydrodipicolinate (HTPA). The chain is 4-hydroxy-tetrahydrodipicolinate synthase from Stutzerimonas stutzeri (strain A1501) (Pseudomonas stutzeri).